Consider the following 212-residue polypeptide: MRLIIFGPPGAGKGTQAGLLEERHGITQISTGDILREAMAQETELGQKAKSYIDAGELVPDALVRDLAEQAIADEGHDDFMLDGYPRTDQQAEWLTEFLASNETPLDGVLSMKVPDDVLVRRLSRRRVHEETGETYHLDHDPPPEDVDPDLIVQRSDDEPETIQNRLDVYREETAPLATYYEERDLLVPVDGTGGIEEVFGRIEEALDALER.

Residue 10–15 (GAGKGT) participates in ATP binding. Residues 30-59 (STGDILREAMAQETELGQKAKSYIDAGELV) form an NMP region. Residues Thr-31, Arg-36, 57–59 (ELV), 84–87 (GYPR), and Gln-91 each bind AMP. The interval 125-158 (RRRVHEETGETYHLDHDPPPEDVDPDLIVQRSDD) is LID. ATP-binding positions include Arg-126 and 135-136 (TY). AMP-binding residues include Arg-155 and Arg-166. Gly-194 contacts ATP.

The protein belongs to the adenylate kinase family. In terms of assembly, monomer.

Its subcellular location is the cytoplasm. The catalysed reaction is AMP + ATP = 2 ADP. It participates in purine metabolism; AMP biosynthesis via salvage pathway; AMP from ADP: step 1/1. Its function is as follows. Catalyzes the reversible transfer of the terminal phosphate group between ATP and AMP. Plays an important role in cellular energy homeostasis and in adenine nucleotide metabolism. The chain is Adenylate kinase from Salinibacter ruber (strain DSM 13855 / M31).